The primary structure comprises 256 residues: Isoprenyl transferase 1 (256 aa).

The active site involves Asp-34. Asp-34 is a Mg(2+) binding site. Substrate contacts are provided by residues 35–38 (GNRR), Trp-39, His-52, and 80–82 (STE). The active-site Proton acceptor is Asn-83. Substrate contacts are provided by residues Arg-86, Arg-205, and 211–213 (RLS). Glu-224 provides a ligand contact to Mg(2+).

The protein belongs to the UPP synthase family. As to quaternary structure, homodimer. Mg(2+) is required as a cofactor.

Its function is as follows. Catalyzes the condensation of isopentenyl diphosphate (IPP) with allylic pyrophosphates generating different type of terpenoids. The protein is Isoprenyl transferase 1 of Corynebacterium efficiens (strain DSM 44549 / YS-314 / AJ 12310 / JCM 11189 / NBRC 100395).